Consider the following 333-residue polypeptide: Holliday junction branch migration complex subunit RuvB (333 aa).

The tract at residues 1–182 is large ATPase domain (RuvB-L); that stretch reads MDERLLSGES…FGVLSRLEYY (182 aa). ATP-binding positions include Leu21, Arg22, Gly63, Lys66, Thr67, Thr68, 129-131, Arg172, Tyr182, and Arg219; that span reads EDF. Residue Thr67 coordinates Mg(2+). The interval 183–253 is small ATPAse domain (RuvB-S); the sequence is TVDQLSAIVE…ITQMALELLQ (71 aa). Positions 256 to 333 are head domain (RuvB-H); sequence KLGLDHIDHK…EHFGMEMPKV (78 aa). Residues Arg311 and Arg316 each contribute to the DNA site.

This sequence belongs to the RuvB family. Homohexamer. Forms an RuvA(8)-RuvB(12)-Holliday junction (HJ) complex. HJ DNA is sandwiched between 2 RuvA tetramers; dsDNA enters through RuvA and exits via RuvB. An RuvB hexamer assembles on each DNA strand where it exits the tetramer. Each RuvB hexamer is contacted by two RuvA subunits (via domain III) on 2 adjacent RuvB subunits; this complex drives branch migration. In the full resolvosome a probable DNA-RuvA(4)-RuvB(12)-RuvC(2) complex forms which resolves the HJ.

The protein resides in the cytoplasm. It carries out the reaction ATP + H2O = ADP + phosphate + H(+). In terms of biological role, the RuvA-RuvB-RuvC complex processes Holliday junction (HJ) DNA during genetic recombination and DNA repair, while the RuvA-RuvB complex plays an important role in the rescue of blocked DNA replication forks via replication fork reversal (RFR). RuvA specifically binds to HJ cruciform DNA, conferring on it an open structure. The RuvB hexamer acts as an ATP-dependent pump, pulling dsDNA into and through the RuvAB complex. RuvB forms 2 homohexamers on either side of HJ DNA bound by 1 or 2 RuvA tetramers; 4 subunits per hexamer contact DNA at a time. Coordinated motions by a converter formed by DNA-disengaged RuvB subunits stimulates ATP hydrolysis and nucleotide exchange. Immobilization of the converter enables RuvB to convert the ATP-contained energy into a lever motion, pulling 2 nucleotides of DNA out of the RuvA tetramer per ATP hydrolyzed, thus driving DNA branch migration. The RuvB motors rotate together with the DNA substrate, which together with the progressing nucleotide cycle form the mechanistic basis for DNA recombination by continuous HJ branch migration. Branch migration allows RuvC to scan DNA until it finds its consensus sequence, where it cleaves and resolves cruciform DNA. This Bacillus mycoides (strain KBAB4) (Bacillus weihenstephanensis) protein is Holliday junction branch migration complex subunit RuvB.